A 51-amino-acid chain; its full sequence is Conotoxin Cal6.33 (51 aa).

Positions 1–22 are cleaved as a signal peptide; the sequence is MKLTCVVIIAVLILTACQFTTA. 3 cysteine pairs are disulfide-bonded: C25-C39, C32-C43, and C38-C50.

It belongs to the conotoxin O1 superfamily. Expressed by the venom duct.

The protein localises to the secreted. Its function is as follows. Probable neurotoxin. The polypeptide is Conotoxin Cal6.33 (Californiconus californicus (California cone)).